The chain runs to 379 residues: Odorant receptor 33b (379 aa).

At M1–D37 the chain is on the cytoplasmic side. The helical transmembrane segment at L38 to M58 threads the bilayer. Residues E59–D64 are Extracellular-facing. The chain crosses the membrane as a helical span at residues V65 to F85. Topologically, residues R86–S129 are cytoplasmic. A helical membrane pass occupies residues F130 to G150. Topologically, residues H151–A165 are extracellular. A helical transmembrane segment spans residues T166–L186. The Cytoplasmic segment spans residues Q187–Q256. A helical membrane pass occupies residues L257 to F277. Residues A278–N281 are Extracellular-facing. The chain crosses the membrane as a helical span at residues F282–C302. The Cytoplasmic segment spans residues Y303–G355. A helical transmembrane segment spans residues I356 to M376. Over S377–R379 the chain is Extracellular.

It belongs to the insect chemoreceptor superfamily. Heteromeric odorant receptor channel (TC 1.A.69) family. Or2a subfamily. As to quaternary structure, interacts with Orco. Complexes exist early in the endomembrane system in olfactory sensory neurons (OSNs), coupling these complexes to the conserved ciliary trafficking pathway. In terms of tissue distribution, expressed in 15 cells in the antenna but not the maxillary palp.

It localises to the cell membrane. Its function is as follows. Odorant receptor which mediates acceptance or avoidance behavior, depending on its substrates. The odorant receptor repertoire encodes a large collection of odor stimuli that vary widely in identity, intensity, and duration. May form a complex with Orco to form odorant-sensing units, providing sensitive and prolonged odorant signaling and calcium permeability. Involved in the behavioral responses to pentyl acetate and pyrazines. This chain is Odorant receptor 33b (Or33b), found in Drosophila melanogaster (Fruit fly).